We begin with the raw amino-acid sequence, 87 residues long: Omega-lycotoxin-Am1b (87 aa).

Residues 1-17 (MKLSIFFVLFFIAIAYC) form the signal peptide. Positions 18–40 (QPEFLDDEEDEVEETLPVAEEGR) are excised as a propeptide. Cystine bridges form between Cys-44–Cys-59, Cys-51–Cys-64, Cys-58–Cys-84, and Cys-66–Cys-82.

It belongs to the neurotoxin omega-lctx family. As to expression, expressed by the venom gland.

The protein localises to the secreted. In terms of biological role, modulates Cav2.1/CACNA1A voltage-gated calcium channels (P/Q-type currents) in rat cerebellar Purkinje cells and hippocampal CA1-CA3 neurons. At saturating concentrations (&gt;10 nM) decelerates activation kinetics and slightly increases peak amplitude without affecting deactivation kinetics. In vivo, does not cause death when intravenously injected into mice. In rat models, through its activity on Cav2.1/CACNA1A, has an ameliorative effect on memory defects provoked by hyperstimulation of N-methyl-D-aspartate receptors (NMDARs) in the hippocampus. The polypeptide is Omega-lycotoxin-Am1b (Alopecosa marikovskyi (Wolf spider)).